A 479-amino-acid polypeptide reads, in one-letter code: Ribosomal RNA small subunit methyltransferase F (479 aa).

S-adenosyl-L-methionine-binding positions include Ala125–Lys131, Glu149, Asp176, and Asp194. The active-site Nucleophile is Cys247.

Belongs to the class I-like SAM-binding methyltransferase superfamily. RsmB/NOP family.

The protein localises to the cytoplasm. It carries out the reaction cytidine(1407) in 16S rRNA + S-adenosyl-L-methionine = 5-methylcytidine(1407) in 16S rRNA + S-adenosyl-L-homocysteine + H(+). In terms of biological role, specifically methylates the cytosine at position 1407 (m5C1407) of 16S rRNA. This Escherichia coli (strain SE11) protein is Ribosomal RNA small subunit methyltransferase F.